We begin with the raw amino-acid sequence, 301 residues long: Protein KTI12 homolog (301 aa).

8–15 is an ATP binding site; sequence GQPCSGKS. The segment at 262–275 is calmodulin-binding; sequence LRRTFIKLAGQYSL.

It belongs to the KTI12 family. Interacts with the elongator complex. Binds to calmodulin in a calcium-dependent manner.

The protein resides in the cytoplasm. It is found in the nucleus. Functionally, elongator complex-associated factor that is not a structural subunit but rather transiently contacts the complex. Regulates both meristem activity and organ growth; acts as a positive regulator of adaxial leaf patterning. Required for an early step in synthesis of 5-carbamoylmethyl (ncm5) groups present on uridines (ncm5U) at the wobble position in tRNA. The sequence is that of Protein KTI12 homolog from Oryza sativa subsp. indica (Rice).